The sequence spans 347 residues: Lipoyl synthase (347 aa).

Residues Cys-77, Cys-82, Cys-88, Cys-103, Cys-107, Cys-110, and Ser-317 each contribute to the [4Fe-4S] cluster site. A Radical SAM core domain is found at 89 to 306 (FADGTATFMI…MDYGKKIGFF (218 aa)).

Belongs to the radical SAM superfamily. Lipoyl synthase family. It depends on [4Fe-4S] cluster as a cofactor.

It localises to the cytoplasm. It carries out the reaction [[Fe-S] cluster scaffold protein carrying a second [4Fe-4S](2+) cluster] + N(6)-octanoyl-L-lysyl-[protein] + 2 oxidized [2Fe-2S]-[ferredoxin] + 2 S-adenosyl-L-methionine + 4 H(+) = [[Fe-S] cluster scaffold protein] + N(6)-[(R)-dihydrolipoyl]-L-lysyl-[protein] + 4 Fe(3+) + 2 hydrogen sulfide + 2 5'-deoxyadenosine + 2 L-methionine + 2 reduced [2Fe-2S]-[ferredoxin]. The protein operates within protein modification; protein lipoylation via endogenous pathway; protein N(6)-(lipoyl)lysine from octanoyl-[acyl-carrier-protein]: step 2/2. Functionally, catalyzes the radical-mediated insertion of two sulfur atoms into the C-6 and C-8 positions of the octanoyl moiety bound to the lipoyl domains of lipoate-dependent enzymes, thereby converting the octanoylated domains into lipoylated derivatives. The sequence is that of Lipoyl synthase from Psychrobacter arcticus (strain DSM 17307 / VKM B-2377 / 273-4).